A 183-amino-acid polypeptide reads, in one-letter code: Protein jagunal homolog 1 (183 aa).

At 1 to 39 (MASRAGPRAAGTDGSDFQHRERVAMHYQMSVTLKYEIKK) the chain is on the cytoplasmic side. Serine 3 carries the phosphoserine modification. Residues 40 to 60 (LIYVHLVIWLLLVAKMSVGHL) form a helical membrane-spanning segment. Over 61–71 (RLLSHDQVAMP) the chain is Lumenal. The chain crosses the membrane as a helical span at residues 72–92 (YQWEYPYLLSIVPSVLGLLSF). Topologically, residues 93-96 (PRNN) are cytoplasmic. The helical transmembrane segment at 97–117 (ISYLVLSMISMGLFSIAPLIY) threads the bilayer. The Lumenal portion of the chain corresponds to 118 to 137 (GSMEMFPAAQQLYRHGKAYR). Residues 138–158 (FLFGFSAVSVMYLVLVLAVQV) form a helical membrane-spanning segment. Residues 159–183 (HAWQLYYSKKLLDSWFTSTQEKKRK) are Cytoplasmic-facing.

Belongs to the jagunal family. Interacts with COPA, COPB2 and COPG2.

The protein localises to the endoplasmic reticulum membrane. Functionally, endoplasmic reticulum transmembrane protein involved in vesicle-mediated transport, which is required for neutrophil function. Required for vesicle-mediated transport; it is however unclear whether it is involved in early secretory pathway or intracellular protein transport. Acts as a regulator of neutrophil function, probably via its role in vesicle-mediated transport: required for defense against fungal pathogens and for granulocyte colony-stimulating factor (GM-CSF) signaling pathway; possibly by regulating glycosylation and/or targeting of proteins contributing to the viability and migration of neutrophils. In Mus musculus (Mouse), this protein is Protein jagunal homolog 1.